Consider the following 152-residue polypeptide: Deoxyuridine 5'-triphosphate nucleotidohydrolase (152 aa).

Residues 71–73, N84, 88–90, and K98 contribute to the substrate site; these read RSG and LID.

The protein belongs to the dUTPase family. Mg(2+) serves as cofactor.

The enzyme catalyses dUTP + H2O = dUMP + diphosphate + H(+). It participates in pyrimidine metabolism; dUMP biosynthesis; dUMP from dCTP (dUTP route): step 2/2. Functionally, this enzyme is involved in nucleotide metabolism: it produces dUMP, the immediate precursor of thymidine nucleotides and it decreases the intracellular concentration of dUTP so that uracil cannot be incorporated into DNA. In Legionella pneumophila (strain Paris), this protein is Deoxyuridine 5'-triphosphate nucleotidohydrolase.